The primary structure comprises 294 residues: Elongation factor Ts (294 aa).

Positions 81 to 84 (TDFV) are involved in Mg(2+) ion dislocation from EF-Tu.

This sequence belongs to the EF-Ts family.

It localises to the cytoplasm. Functionally, associates with the EF-Tu.GDP complex and induces the exchange of GDP to GTP. It remains bound to the aminoacyl-tRNA.EF-Tu.GTP complex up to the GTP hydrolysis stage on the ribosome. This chain is Elongation factor Ts, found in Hydrogenovibrio crunogenus (strain DSM 25203 / XCL-2) (Thiomicrospira crunogena).